A 39-amino-acid polypeptide reads, in one-letter code: Mating pheromone Er-11 (39 aa).

3 disulfides stabilise this stretch: Cys-3/Cys-19, Cys-10/Cys-34, and Cys-15/Cys-26.

As to quaternary structure, homodimer.

The protein localises to the secreted. Mating ciliate pheromones (or gamones) are diffusible extracellular communication signals that distinguish different intraspecific classes of cells commonly referred to as 'mating types'. They prepare the latter for conjugation by changing their cell surface properties. This chain is Mating pheromone Er-11 (MAT11), found in Euplotes raikovi.